A 639-amino-acid polypeptide reads, in one-letter code: 1-deoxy-D-xylulose-5-phosphate synthase (639 aa).

Thiamine diphosphate contacts are provided by residues His79 and 120–122 (AHS). Residue Asp151 participates in Mg(2+) binding. Residues 152 to 153 (GA), Asn180, Tyr289, and Glu371 each bind thiamine diphosphate. Asn180 contacts Mg(2+).

It belongs to the transketolase family. DXPS subfamily. As to quaternary structure, homodimer. Mg(2+) serves as cofactor. Thiamine diphosphate is required as a cofactor.

It catalyses the reaction D-glyceraldehyde 3-phosphate + pyruvate + H(+) = 1-deoxy-D-xylulose 5-phosphate + CO2. It functions in the pathway metabolic intermediate biosynthesis; 1-deoxy-D-xylulose 5-phosphate biosynthesis; 1-deoxy-D-xylulose 5-phosphate from D-glyceraldehyde 3-phosphate and pyruvate: step 1/1. In terms of biological role, catalyzes the acyloin condensation reaction between C atoms 2 and 3 of pyruvate and glyceraldehyde 3-phosphate to yield 1-deoxy-D-xylulose-5-phosphate (DXP). This is 1-deoxy-D-xylulose-5-phosphate synthase from Allorhizobium ampelinum (strain ATCC BAA-846 / DSM 112012 / S4) (Agrobacterium vitis (strain S4)).